Here is a 446-residue protein sequence, read N- to C-terminus: Exodeoxyribonuclease 7 large subunit (446 aa).

Belongs to the XseA family. As to quaternary structure, heterooligomer composed of large and small subunits.

It is found in the cytoplasm. It catalyses the reaction Exonucleolytic cleavage in either 5'- to 3'- or 3'- to 5'-direction to yield nucleoside 5'-phosphates.. Bidirectionally degrades single-stranded DNA into large acid-insoluble oligonucleotides, which are then degraded further into small acid-soluble oligonucleotides. In Staphylococcus carnosus (strain TM300), this protein is Exodeoxyribonuclease 7 large subunit.